Reading from the N-terminus, the 501-residue chain is Dynein regulatory complex subunit 5 (501 aa).

A compositionally biased stretch (polar residues) spans 1 to 23 (MQDTVTTSALLDPSHSSVSTQDN). Disordered regions lie at residues 1-56 (MQDT…HPRA) and 202-222 (LPAQ…EMEE). Residues 24-34 (SSTGGHTSSTS) show a composition bias toward low complexity. LRR repeat units lie at residues 308-321 (VLEE…LIGD), 335-355 (RLRV…QSLA), 363-383 (NLIS…QALA), 391-411 (CLTT…TLLS), and 419-439 (TLTS…KQLL).

The protein belongs to the DRC5 family. As to quaternary structure, component of the nexin-dynein regulatory complex (N-DRC). Interacts with DRC1. Interacts with FBXL13/DRC6, DRC3 and DRC7.

The protein resides in the cell projection. It is found in the cilium. The protein localises to the flagellum. Its subcellular location is the cytoplasm. It localises to the cytoskeleton. The protein resides in the flagellum axoneme. Its function is as follows. Component of the nexin-dynein regulatory complex (N-DRC) a key regulator of ciliary/flagellar motility which maintains the alignment and integrity of the distal axoneme and regulates microtubule sliding in motile axonemes. May play a role in the assembly of N-DRC. May be required for sperm motility. This Homo sapiens (Human) protein is Dynein regulatory complex subunit 5 (TCTE1).